The sequence spans 128 residues: UPF0325 protein CKO_03204 (128 aa).

Belongs to the UPF0325 family.

The polypeptide is UPF0325 protein CKO_03204 (Citrobacter koseri (strain ATCC BAA-895 / CDC 4225-83 / SGSC4696)).